The following is a 285-amino-acid chain: Phosphatidylserine decarboxylase proenzyme (285 aa).

Active-site charge relay system; for autoendoproteolytic cleavage activity residues include Asp96, His152, and Ser250. Catalysis depends on Ser250, which acts as the Schiff-base intermediate with substrate; via pyruvic acid; for decarboxylase activity. A Pyruvic acid (Ser); by autocatalysis modification is found at Ser250.

It belongs to the phosphatidylserine decarboxylase family. PSD-B subfamily. Prokaryotic type I sub-subfamily. Heterodimer of a large membrane-associated beta subunit and a small pyruvoyl-containing alpha subunit. Pyruvate is required as a cofactor. Post-translationally, is synthesized initially as an inactive proenzyme. Formation of the active enzyme involves a self-maturation process in which the active site pyruvoyl group is generated from an internal serine residue via an autocatalytic post-translational modification. Two non-identical subunits are generated from the proenzyme in this reaction, and the pyruvate is formed at the N-terminus of the alpha chain, which is derived from the carboxyl end of the proenzyme. The autoendoproteolytic cleavage occurs by a canonical serine protease mechanism, in which the side chain hydroxyl group of the serine supplies its oxygen atom to form the C-terminus of the beta chain, while the remainder of the serine residue undergoes an oxidative deamination to produce ammonia and the pyruvoyl prosthetic group on the alpha chain. During this reaction, the Ser that is part of the protease active site of the proenzyme becomes the pyruvoyl prosthetic group, which constitutes an essential element of the active site of the mature decarboxylase.

It localises to the cell membrane. It catalyses the reaction a 1,2-diacyl-sn-glycero-3-phospho-L-serine + H(+) = a 1,2-diacyl-sn-glycero-3-phosphoethanolamine + CO2. It functions in the pathway phospholipid metabolism; phosphatidylethanolamine biosynthesis; phosphatidylethanolamine from CDP-diacylglycerol: step 2/2. Catalyzes the formation of phosphatidylethanolamine (PtdEtn) from phosphatidylserine (PtdSer). This is Phosphatidylserine decarboxylase proenzyme from Acinetobacter baylyi (strain ATCC 33305 / BD413 / ADP1).